The sequence spans 317 residues: Putative ribosomal protein uL10-like (317 aa).

Y24 carries the phosphotyrosine modification. Position 59 is a phosphothreonine (T59). The tract at residues 292-317 is disordered; the sequence is AAAPAKVEAKEESEESDEDMGFGLFD. K297 is covalently cross-linked (Glycyl lysine isopeptide (Lys-Gly) (interchain with G-Cter in SUMO1); alternate). Residue K297 forms a Glycyl lysine isopeptide (Lys-Gly) (interchain with G-Cter in SUMO2); alternate linkage. A compositionally biased stretch (acidic residues) spans 302 to 311; it reads EESEESDEDM. S304 and S307 each carry phosphoserine.

Belongs to the universal ribosomal protein uL10 family. As to quaternary structure, P0 forms a pentameric complex by interaction with dimers of P1 and P2.

Functionally, ribosomal protein P0 is the functional equivalent of E.coli protein L10. The sequence is that of Putative ribosomal protein uL10-like (RPLP0P6) from Homo sapiens (Human).